Consider the following 208-residue polypeptide: Large ribosomal subunit protein uL3 (208 aa).

A disordered region spans residues 123 to 147 (RHGQSRGPMAHGSRYHRRPGSMGPV).

The protein belongs to the universal ribosomal protein uL3 family. As to quaternary structure, part of the 50S ribosomal subunit. Forms a cluster with proteins L14 and L19.

Its function is as follows. One of the primary rRNA binding proteins, it binds directly near the 3'-end of the 23S rRNA, where it nucleates assembly of the 50S subunit. In Streptococcus gordonii (strain Challis / ATCC 35105 / BCRC 15272 / CH1 / DL1 / V288), this protein is Large ribosomal subunit protein uL3.